Reading from the N-terminus, the 590-residue chain is MHAFRTHTCAELTKDAVGQTVRLSGWVHRVRDHGGVLFIDLRDHYGMTQVLCDPDSPVFSQVEKVRSEWCIRIDGTVKARDESLINPKIPTGEIEVFIRDMEVLGTAEELPLPVFGDQEYPEETRLKYRFLDLRRESLHDNIMLRSKVVQSIRKRMWDIDFTEFQTPIITASSPEGARDFLVPSRLHPGKFYALPQAPQQFKQLIMVGGFDKYFQIAPCFRDEDPRADRSPTDFYQLDLEMSFVSQQDVFDTIQPVIAGIFEEFGGGRRVDTDWPLISYRDSALWYGTDKPDLRNPIKMQIVSDHFAGSGFAIFAKLLEQEGTEIRAIPAPGGGSRKFCDRMNKFAQEQGLPGMGYIFWRDQGQGMEAAGPLAKNIGPERTEAIRQQLGLQVGDAAFFLGGKPASFEAVAGRARTVIGEELGLIDQDRFAFAWIVDFPMYEKDDEGRIDFSHNPFSMPQGGMAALEGDPLEVLGYQYDLACNGYELVSGAIRNHKLDIMYKAFEIAGYGADEVEKRFGGMVNAFKYGPPPHGGCAAGIDRIVMLLADTANIREVIMFPMNQRAEDLMMNAPSEPTGEQLRDLSLRVIPQE.

L-aspartate is bound at residue glutamate 175. Residues 199 to 202 form an aspartate region; that stretch reads QQFK. Arginine 221 and histidine 452 together coordinate L-aspartate. An ATP-binding site is contributed by 221–223; that stretch reads RDE. Residue glutamate 485 participates in ATP binding. Arginine 492 contributes to the L-aspartate binding site. 537–540 serves as a coordination point for ATP; it reads GIDR.

Belongs to the class-II aminoacyl-tRNA synthetase family. Type 1 subfamily. Homodimer.

Its subcellular location is the cytoplasm. The catalysed reaction is tRNA(Asx) + L-aspartate + ATP = L-aspartyl-tRNA(Asx) + AMP + diphosphate. Aspartyl-tRNA synthetase with relaxed tRNA specificity since it is able to aspartylate not only its cognate tRNA(Asp) but also tRNA(Asn). Reaction proceeds in two steps: L-aspartate is first activated by ATP to form Asp-AMP and then transferred to the acceptor end of tRNA(Asp/Asn). In Dinoroseobacter shibae (strain DSM 16493 / NCIMB 14021 / DFL 12), this protein is Aspartate--tRNA(Asp/Asn) ligase.